The following is a 148-amino-acid chain: Hemoglobin subunit beta-1 (148 aa).

The Globin domain occupies 3–148 (EWTDAERTAI…VVSALCRQYH (146 aa)). Positions 64 and 93 each coordinate heme b.

In terms of assembly, heterotetramer of two alpha chains and two beta chains. As to expression, red blood cells.

In terms of biological role, involved in oxygen transport from gills to the various peripheral tissues. This chain is Hemoglobin subunit beta-1 (ba1), found in Danio rerio (Zebrafish).